The primary structure comprises 37 residues: Large ribosomal subunit protein bL36 (37 aa).

It belongs to the bacterial ribosomal protein bL36 family.

In Staphylococcus saprophyticus subsp. saprophyticus (strain ATCC 15305 / DSM 20229 / NCIMB 8711 / NCTC 7292 / S-41), this protein is Large ribosomal subunit protein bL36.